A 434-amino-acid chain; its full sequence is ATP phosphoribosyltransferase regulatory subunit (434 aa).

Belongs to the class-II aminoacyl-tRNA synthetase family. HisZ subfamily. Heteromultimer composed of HisG and HisZ subunits.

It localises to the cytoplasm. It participates in amino-acid biosynthesis; L-histidine biosynthesis; L-histidine from 5-phospho-alpha-D-ribose 1-diphosphate: step 1/9. Its function is as follows. Required for the first step of histidine biosynthesis. May allow the feedback regulation of ATP phosphoribosyltransferase activity by histidine. The protein is ATP phosphoribosyltransferase regulatory subunit of Geobacter metallireducens (strain ATCC 53774 / DSM 7210 / GS-15).